Reading from the N-terminus, the 601-residue chain is Probable cytochrome P450 525A1 (601 aa).

A helical transmembrane segment spans residues 12–32; sequence ISYFLTCSIFGFILWILTEQI. Positions 205–253 are disordered; the sequence is NNNNNNNNNNNNNNNNNNNNNNNNNNNNNNNNNNNNNNNNNNNNNNNNN. Cysteine 544 contacts heme.

The protein belongs to the cytochrome P450 family. Requires heme as cofactor.

The protein resides in the membrane. This is Probable cytochrome P450 525A1 (cyp525A1) from Dictyostelium discoideum (Social amoeba).